The sequence spans 507 residues: Cytochrome P450 monooxygenase ptmU (507 aa).

A helical transmembrane segment spans residues V4–F24. Residues N98, N202, and N398 are each glycosylated (N-linked (GlcNAc...) asparagine). C444 is a binding site for heme.

This sequence belongs to the cytochrome P450 family. The cofactor is heme.

It localises to the membrane. Its pathway is secondary metabolite biosynthesis. Functionally, cytochrome P450 monooxygenase; part of the gene cluster that mediates the biosynthesis of the indole diterpenes penitrems. The geranylgeranyl diphosphate (GGPP) synthase ptmG catalyzes the first step in penitrem biosynthesis via conversion of farnesyl pyrophosphate and isopentyl pyrophosphate into geranylgeranyl pyrophosphate (GGPP). Condensation of indole-3-glycerol phosphate with GGPP by the prenyl transferase ptmC then forms 3-geranylgeranylindole (3-GGI). Epoxidation by the FAD-dependent monooxygenase ptmM leads to a epoxidized-GGI that is substrate of the terpene cyclase ptmB for cyclization to yield paspaline. Paspaline is subsequently converted to 13-desoxypaxilline by the cytochrome P450 monooxygenase ptmP, the latter being then converted to paxilline by the cytochrome P450 monooxygenase ptmQ. Paxilline is converted to beta-paxitriol via C-10 ketoreduction by the short-chain dehydrogenase ptmH which can be monoprenylated at the C-20 by the indole diterpene prenyltransferase ptmD. A two-step elimination (acetylation and elimination) process performed by the O-acetyltransferase ptmV and ptmI leads to the production of the prenylated form of penijanthine. The FAD-linked oxidoreductase ptmO then converts the prenylated form of penijanthine into PC-M5 which is in turn transformed into PC-M4 by the aromatic dimethylallyltransferase ptmE. Five sequential oxidative transformations performed by the cytochrome P450 monooxygenases ptmK, ptmU, ptmL, ptmN and ptmJ yield the various penitrem compounds. PtmK, ptmU and ptmM are involved in the formation of the key bicyclic ring of penitrem C via the formation of the intermediates secopenitrem D and penitrem D. PtmL catalyzes the epoxidation of penitrem D and C to yield penitrem B and F, respectively. PtmJ catalyzes the last benzylic hydroxylation to convert penitrem B to prenitrem E and penitrem F to penitrem A. In Penicillium ochrochloron, this protein is Cytochrome P450 monooxygenase ptmU.